The following is a 207-amino-acid chain: BON1-associated protein 2 (207 aa).

Residues 1–112 (MSYSTFKRSL…GFAPQGHLNF (112 aa)) enclose the C2 domain.

In terms of assembly, interacts with BON1, BON2 and BON3. In terms of tissue distribution, expressed in roots, leaves, stems and flowers.

The protein localises to the membrane. Negative regulator of cell death and defense responses. Exhibits calcium-dependent phospholipid binding properties. This is BON1-associated protein 2 (BAP2) from Arabidopsis thaliana (Mouse-ear cress).